The primary structure comprises 165 residues: Large ribosomal subunit protein uL15 (165 aa).

The disordered stretch occupies residues 1-44 (MSLNQLKAPRGANRAKKRVGRGQGSGLGKTAGRGGKGQKARSGN). A compositionally biased stretch (gly residues) spans 21–37 (RGQGSGLGKTAGRGGKG).

The protein belongs to the universal ribosomal protein uL15 family. As to quaternary structure, part of the 50S ribosomal subunit.

Binds to the 23S rRNA. The sequence is that of Large ribosomal subunit protein uL15 from Anaeromyxobacter dehalogenans (strain 2CP-1 / ATCC BAA-258).